We begin with the raw amino-acid sequence, 330 residues long: tRNA dimethylallyltransferase (330 aa).

A compositionally biased stretch (polar residues) spans 1–11 (MDYSHSDSPST). Positions 1–21 (MDYSHSDSPSTAPAGKTPVDQ) are disordered. Position 29–36 (29–36 (GPTGAGKS)) interacts with ATP. A substrate-binding site is contributed by 31 to 36 (TGAGKS). Residues 56–59 (DSMQ) are interaction with substrate tRNA.

Belongs to the IPP transferase family. Monomer. Mg(2+) is required as a cofactor.

The catalysed reaction is adenosine(37) in tRNA + dimethylallyl diphosphate = N(6)-dimethylallyladenosine(37) in tRNA + diphosphate. In terms of biological role, catalyzes the transfer of a dimethylallyl group onto the adenine at position 37 in tRNAs that read codons beginning with uridine, leading to the formation of N6-(dimethylallyl)adenosine (i(6)A). The sequence is that of tRNA dimethylallyltransferase from Corynebacterium urealyticum (strain ATCC 43042 / DSM 7109).